Reading from the N-terminus, the 135-residue chain is 30 kDa antigenic glycoprotein (135 aa).

A signal peptide spans 1-5 (GNTYS). Residues asparagine 22, asparagine 31, asparagine 57, and asparagine 73 are each glycosylated (N-linked (GlcNAc...) asparagine).

To H.contortus 15 kDa excretory/secretory protein.

It localises to the secreted. This chain is 30 kDa antigenic glycoprotein, found in Trichostrongylus colubriformis (Black scour worm).